Reading from the N-terminus, the 2225-residue chain is Multifunctional protein CAD (2225 aa).

An N-acetylalanine modification is found at alanine 2. Positions 2-365 (AALVLEDGSV…TVKEATAGNP (364 aa)) are GATase (Glutamine amidotransferase). L-glutamine-binding residues include serine 44, glycine 222, and glycine 224. Residues 177–363 (RILALDCGLK…LETVKEATAG (187 aa)) enclose the Glutamine amidotransferase type-1 domain. Cysteine 252 functions as the Nucleophile; for GATase activity in the catalytic mechanism. L-glutamine-binding residues include leucine 253, glutamine 256, asparagine 294, glycine 296, and phenylalanine 297. Active-site for GATase activity residues include histidine 336 and glutamate 338. Positions 366 to 394 (GGQTVRERLTERLCPPGIPTPGSGLPPPR) are linker. Positions 395–933 (KVLILGSGGL…TTHDLTFRTP (539 aa)) are CPSase A. Residues 395–1455 (KVLILGSGGL…APPLKVHVDC (1061 aa)) form a CPSase (Carbamoyl phosphate synthase) region. A Phosphothreonine; by MAPK1 modification is found at threonine 456. ATP is bound by residues arginine 515, arginine 555, glycine 561, glycine 562, lysine 592, glutamate 599, glycine 625, isoleucine 626, histidine 627, glutamine 668, and glutamate 682. Residues 519–711 (AARMAEIGEH…LAYVAAKLAL (193 aa)) form the ATP-grasp 1 domain. Residues glutamine 668, glutamate 682, and asparagine 684 each coordinate Mg(2+). Glutamine 668, glutamate 682, and asparagine 684 together coordinate Mn(2+). Lysine 747 bears the N6-acetyllysine mark. The segment at 934-1455 (HVLVLGSGVY…APPLKVHVDC (522 aa)) is CPSase B. Serine 1038 carries the phosphoserine modification. An ATP-grasp 2 domain is found at 1052–1243 (SRLLDTIGIS…LVALATRVIM (192 aa)). ATP-binding residues include arginine 1088, lysine 1127, isoleucine 1129, glutamate 1134, glycine 1159, valine 1160, histidine 1161, serine 1162, glutamine 1202, and glutamate 1214. Mg(2+) is bound by residues glutamine 1202, glutamate 1214, and asparagine 1216. 3 residues coordinate Mn(2+): glutamine 1202, glutamate 1214, and asparagine 1216. An MGS-like domain is found at 1308–1462 (FKIPKKNILL…VDCMTSQKLV (155 aa)). The residue at position 1406 (serine 1406) is a Phosphoserine; by PKA. An N6-acetyllysine modification is found at lysine 1411. Positions 1456–1788 (MTSQKLVRLP…VKGTVRRVVL (333 aa)) are DHOase (dihydroorotase). Zn(2+) contacts are provided by histidine 1471 and histidine 1473. (S)-dihydroorotate is bound by residues arginine 1475 and asparagine 1505. Residues lysine 1556, histidine 1590, cysteine 1613, histidine 1614, and glutamate 1637 each contribute to the Zn(2+) site. Lysine 1556 is modified (N6-carboxylysine). Arginine 1661 contacts (S)-dihydroorotate. Zn(2+) is bound at residue aspartate 1686. Aspartate 1686 acts as the For DHOase activity in catalysis. (S)-dihydroorotate is bound by residues histidine 1690 and proline 1702. Positions 1789–1917 (RGEVAYIDGQ…GLLHPQTSPL (129 aa)) are linker. Residues 1811 to 1899 (KWPQGAVPQL…YPPPPVPRQA (89 aa)) form a disordered region. A compositionally biased stretch (polar residues) spans 1825 to 1834 (PATSEMTTTP). Position 1859 is a phosphoserine; by RPS6KB1 and PKA (serine 1859). Residues 1866–1878 (EEPKEKSSRKVAE) show a composition bias toward basic and acidic residues. Position 1873 is a phosphoserine; by PKC; in vitro (serine 1873). A Phosphothreonine modification is found at threonine 1884. A phosphoserine mark is found at serine 1900 and serine 1938. The interval 1918-2225 (LHSLVGQHIL…ALLATVLGRF (308 aa)) is ATCase (Aspartate transcarbamylase). Carbamoyl phosphate contacts are provided by arginine 1975 and threonine 1976. Lysine 2003 is an L-aspartate binding site. Carbamoyl phosphate-binding residues include arginine 2024, histidine 2052, and glutamine 2055. Residues arginine 2085 and arginine 2146 each contribute to the L-aspartate site. The carbamoyl phosphate site is built by methionine 2185 and proline 2186.

The protein in the N-terminal section; belongs to the CarA family. It in the 2nd section; belongs to the CarB family. This sequence in the 3rd section; belongs to the metallo-dependent hydrolases superfamily. DHOase family. CAD subfamily. In the C-terminal section; belongs to the aspartate/ornithine carbamoyltransferase superfamily. ATCase family. In terms of assembly, homohexamer. Interacts with CIPC. The cofactor is Zn(2+). Requires Mg(2+) as cofactor. It depends on Mn(2+) as a cofactor. Activated by MAP kinase (Erk1/2) phosphorylation just prior to the S phase of the cell cycle, when the demand for pyrimidine nucleotides is greatest, and down-regulated as the cells emerge from S phase by protein kinase A (PKA) phosphorylation. Phosphorylation at Ser-1859 by RPS6KB1 downstream of MTOR promotes oligomerization and stimulates dihydroorotase activity. Phosphorylation at Ser-1406 reduces sensitivity to feedback inhibition by UTP.

The protein resides in the cytoplasm. It is found in the nucleus. The catalysed reaction is hydrogencarbonate + L-glutamine + 2 ATP + H2O = carbamoyl phosphate + L-glutamate + 2 ADP + phosphate + 2 H(+). It catalyses the reaction L-glutamine + H2O = L-glutamate + NH4(+). It carries out the reaction hydrogencarbonate + NH4(+) + 2 ATP = carbamoyl phosphate + 2 ADP + phosphate + 2 H(+). The enzyme catalyses carbamoyl phosphate + L-aspartate = N-carbamoyl-L-aspartate + phosphate + H(+). The catalysed reaction is (S)-dihydroorotate + H2O = N-carbamoyl-L-aspartate + H(+). It participates in pyrimidine metabolism; UMP biosynthesis via de novo pathway; (S)-dihydroorotate from bicarbonate: step 1/3. The protein operates within pyrimidine metabolism; UMP biosynthesis via de novo pathway; (S)-dihydroorotate from bicarbonate: step 2/3. Its pathway is pyrimidine metabolism; UMP biosynthesis via de novo pathway; (S)-dihydroorotate from bicarbonate: step 3/3. Allosterically regulated and controlled by phosphorylation. 5-phosphoribose 1-diphosphate (PRPP) is an activator while UMP and UTP are inhibitors of the CPSase reaction. Multifunctional protein that encodes the first 3 enzymatic activities of the de novo pyrimidine pathway: carbamoylphosphate synthetase (CPSase; EC 6.3.5.5), aspartate transcarbamylase (ATCase; EC 2.1.3.2) and dihydroorotase (DHOase; EC 3.5.2.3). The CPSase-function is accomplished in 2 steps, by a glutamine-dependent amidotransferase activity (GATase) that binds and cleaves glutamine to produce ammonia, followed by an ammonium-dependent carbamoyl phosphate synthetase, which reacts with the ammonia, hydrogencarbonate and ATP to form carbamoyl phosphate. The endogenously produced carbamoyl phosphate is sequestered and channeled to the ATCase active site. ATCase then catalyzes the formation of carbamoyl-L-aspartate from L-aspartate and carbamoyl phosphate. In the last step, DHOase catalyzes the cyclization of carbamoyl aspartate to dihydroorotate. In Homo sapiens (Human), this protein is Multifunctional protein CAD.